The sequence spans 527 residues: Ankyrin repeat domain-containing protein 42 (527 aa).

The tract at residues 1 to 27 is disordered; the sequence is MPGVANPGPSKSRRETADSSSRKKVHF. Positions 12-21 are enriched in basic and acidic residues; it reads SRRETADSSS. ANK repeat units lie at residues 25 to 54, 59 to 88, 92 to 121, 125 to 154, 158 to 187, 191 to 220, 228 to 257, 263 to 293, 297 to 326, and 330 to 360; these read VHFS…NLNE, HQFT…DATQ, RGWT…NLAT, RGCT…DPSV, REWK…GIED, NGNL…SATQ, NGEN…EGSH, DLAF…NLNE, NGST…ESNI, and AGET…EIDD. Residues 395-484 are a coiled coil; it reads NARMRAHKKI…ETLQKIQVTS (90 aa).

The sequence is that of Ankyrin repeat domain-containing protein 42 (Ankrd42) from Mus musculus (Mouse).